A 66-amino-acid polypeptide reads, in one-letter code: Large ribosomal subunit protein bL35 (66 aa).

It belongs to the bacterial ribosomal protein bL35 family.

This chain is Large ribosomal subunit protein bL35, found in Azorhizobium caulinodans (strain ATCC 43989 / DSM 5975 / JCM 20966 / LMG 6465 / NBRC 14845 / NCIMB 13405 / ORS 571).